Consider the following 160-residue polypeptide: Zinc finger A20 and AN1 domain-containing stress-associated protein 6 (160 aa).

The segment at 18–52 (PEAPILCVNNCGFFGSRMTENMCSKCYRDTVKAKT) adopts an A20-type zinc-finger fold. Residues Cys24, Cys28, Cys40, and Cys43 each contribute to the Zn(2+) site. The interval 73 to 94 (EVTDGGSGSVADGKQVMEEDTP) is disordered. The segment at 95 to 141 (KPPSNRCLSCRKKVGLTGFKCRCGGTFCSMHRYADSHKCTFDYKQVG) adopts an AN1-type zinc-finger fold. Zn(2+)-binding residues include Cys101, Cys104, Cys115, Cys117, Cys122, His125, His131, and Cys133.

In terms of biological role, may be involved in environmental stress response. This chain is Zinc finger A20 and AN1 domain-containing stress-associated protein 6 (SAP6), found in Oryza sativa subsp. japonica (Rice).